The chain runs to 103 residues: Histone H4, major (103 aa).

Positions 1–12 (MAGGKGGKGMGK) are enriched in gly residues. The interval 1-29 (MAGGKGGKGMGKVGAKRHSKRSNKASIEG) is disordered. 4 positions are modified to N6-acetyllysine: Lys-5, Lys-8, Lys-12, and Lys-16. Residues 14 to 23 (GAKRHSKRSN) are compositionally biased toward basic residues. A DNA-binding region spans residues 16–21 (KRHSKR).

The protein belongs to the histone H4 family. As to quaternary structure, the nucleosome is a histone octamer containing two molecules each of H2A, H2B, H3 and H4 assembled in one H3-H4 heterotetramer and two H2A-H2B heterodimers. The octamer wraps approximately 147 bp of DNA.

The protein localises to the nucleus. It localises to the chromosome. In terms of biological role, core component of nucleosome. Nucleosomes wrap and compact DNA into chromatin, limiting DNA accessibility to the cellular machineries which require DNA as a template. Histones thereby play a central role in transcription regulation, DNA repair, DNA replication and chromosomal stability. DNA accessibility is regulated via a complex set of post-translational modifications of histones, also called histone code, and nucleosome remodeling. The sequence is that of Histone H4, major from Tetrahymena pyriformis.